Consider the following 325-residue polypeptide: MKYTFNEEKAFDIVAIGRACIDLNAVEYNRPMEETMTFSKYVGGSPANIAIGSAKLGLKAGFIGKIPDDQHGRFIESYMRKTGVDTTQMIVDQDGHKAGLAFTEILSPEECSILMYRDDVADLYLEPSEVSEDYIANAKMLLVSGTALAKSPSREAVLKAVQYAKKHQVKVVFELDYRPYTWQSSDETAVYYSLVAEQSDIVIGTRDEFDVMENRTGGSNEESVNHLFGHSADLVVIKHGVEGSYAYSKSGEVFRAQAYKTKVLKTFGAGDSYASAFIYGLVSGKDIETALKYGSASASIVVSKHSSSEAMPTAEEIEQLIEAQS.

This sequence belongs to the carbohydrate kinase PfkB family.

The catalysed reaction is 5-dehydro-2-deoxy-D-gluconate + ATP = 6-phospho-5-dehydro-2-deoxy-D-gluconate + ADP + H(+). It functions in the pathway polyol metabolism; myo-inositol degradation into acetyl-CoA; acetyl-CoA from myo-inositol: step 5/7. In terms of biological role, catalyzes the phosphorylation of 5-dehydro-2-deoxy-D-gluconate (2-deoxy-5-keto-D-gluconate or DKG) to 6-phospho-5-dehydro-2-deoxy-D-gluconate (DKGP). The protein is 5-dehydro-2-deoxygluconokinase (iolC) of Bacillus subtilis (strain 168).